A 769-amino-acid polypeptide reads, in one-letter code: DNA gyrase subunit B (769 aa).

One can recognise a Toprim domain in the interval 414–528; the sequence is SEIYLVEGDS…NGHIYLAQPP (115 aa). Mg(2+) contacts are provided by E420, D493, and D495.

It belongs to the type II topoisomerase GyrB family. Heterotetramer, composed of two GyrA and two GyrB chains. In the heterotetramer, GyrA contains the active site tyrosine that forms a transient covalent intermediate with DNA, while GyrB binds cofactors and catalyzes ATP hydrolysis. Mg(2+) is required as a cofactor. Mn(2+) serves as cofactor. Requires Ca(2+) as cofactor.

Its subcellular location is the cytoplasm. The enzyme catalyses ATP-dependent breakage, passage and rejoining of double-stranded DNA.. In terms of biological role, a type II topoisomerase that negatively supercoils closed circular double-stranded (ds) DNA in an ATP-dependent manner to modulate DNA topology and maintain chromosomes in an underwound state. Negative supercoiling favors strand separation, and DNA replication, transcription, recombination and repair, all of which involve strand separation. Also able to catalyze the interconversion of other topological isomers of dsDNA rings, including catenanes and knotted rings. Type II topoisomerases break and join 2 DNA strands simultaneously in an ATP-dependent manner. The protein is DNA gyrase subunit B of Campylobacter jejuni subsp. jejuni serotype O:2 (strain ATCC 700819 / NCTC 11168).